A 384-amino-acid chain; its full sequence is Chaperone protein DnaJ (384 aa).

Residues 5–70 form the J domain; sequence DYYEILGVTR…QKKRIYDTYG (66 aa). The segment at 134–212 adopts a CR-type zinc-finger fold; the sequence is GTEKEIRLQT…CNGQGRTRQS (79 aa). Zn(2+)-binding residues include Cys-147, Cys-150, Cys-164, Cys-167, Cys-186, Cys-189, Cys-200, and Cys-203. CXXCXGXG motif repeat units follow at residues 147–154, 164–171, 186–193, and 200–207; these read CEECNGSG, CPVCQGSG, CTRCQGMG, and CKTCNGQG. The interval 352 to 384 is disordered; the sequence is KEKSGEKVRKWPWSKRKDREKKSMAESTREART.

Belongs to the DnaJ family. Homodimer. Zn(2+) serves as cofactor.

Its subcellular location is the cytoplasm. Participates actively in the response to hyperosmotic and heat shock by preventing the aggregation of stress-denatured proteins and by disaggregating proteins, also in an autonomous, DnaK-independent fashion. Unfolded proteins bind initially to DnaJ; upon interaction with the DnaJ-bound protein, DnaK hydrolyzes its bound ATP, resulting in the formation of a stable complex. GrpE releases ADP from DnaK; ATP binding to DnaK triggers the release of the substrate protein, thus completing the reaction cycle. Several rounds of ATP-dependent interactions between DnaJ, DnaK and GrpE are required for fully efficient folding. Also involved, together with DnaK and GrpE, in the DNA replication of plasmids through activation of initiation proteins. This chain is Chaperone protein DnaJ, found in Syntrophobacter fumaroxidans (strain DSM 10017 / MPOB).